A 22-amino-acid chain; its full sequence is Piscidin-3 (22 aa).

Gly22 carries the post-translational modification Glycine amide.

This sequence belongs to the pleurocidin family. In terms of tissue distribution, mast cells in gill, skin and gut, and in lining blood vessels in the viscera.

The protein localises to the secreted. It localises to the membrane. Antimicrobial peptide with broad-spectrum activity against Gram-positive and Gram-negative bacteria. Rapidly inactivates both channel catfish herpesvirus (ED(50)=11 uM) and frog virus 3 (ED(50)=16 uM) over a wide temperature range. Has hemolytic activity. This chain is Piscidin-3, found in Morone chrysops x Morone saxatilis (White bass x Striped bass).